The primary structure comprises 468 residues: UDP-N-acetylmuramoyl-L-alanine--L-glutamate ligase (468 aa).

122-128 (GTKGKST) provides a ligand contact to ATP.

This sequence belongs to the MurCDEF family. MurD2 subfamily.

It is found in the cytoplasm. It catalyses the reaction UDP-N-acetyl-alpha-D-muramoyl-L-alanine + L-glutamate + ATP = UDP-N-acetyl-alpha-D-muramoyl-L-alanyl-L-glutamate + ADP + phosphate + H(+). It functions in the pathway cell wall biogenesis; peptidoglycan biosynthesis. In terms of biological role, cell wall formation. Catalyzes the addition of L-glutamate to the nucleotide precursor UDP-N-acetylmuramoyl-L-alanine. In Xylella fastidiosa (strain 9a5c), this protein is UDP-N-acetylmuramoyl-L-alanine--L-glutamate ligase.